We begin with the raw amino-acid sequence, 461 residues long: RNA-binding protein ZCH321 (461 aa).

C3H1-type zinc fingers lie at residues 63–85 and 181–208; these read LCQLFLNGRCRQGTQCHQVHAAL and ACDFKICGLHTLDRCRYAEECIFLHICK. The interval 224–243 is disordered; that stretch reads TSQARDGGEPGPRGAKKGSV. The MKT1-binding motif signature appears at 446–451; the sequence is WQHNPY.

RNA-binding protein involved in regulation of mRNA stability. Promotes mRNA stabilization by recruiting MKT1 and PBP1. Stabilizes transcripts encoding mitochondrial proteins. In Trypanosoma brucei brucei (strain 927/4 GUTat10.1), this protein is RNA-binding protein ZCH321.